Reading from the N-terminus, the 263-residue chain is Putative ankyrin repeat domain-containing protein 20A12 pseudogene (263 aa).

Coiled-coil stretches lie at residues 65–121 (KKDL…MLES) and 171–263 (NQVF…IQLH).

The polypeptide is Putative ankyrin repeat domain-containing protein 20A12 pseudogene (Homo sapiens (Human)).